We begin with the raw amino-acid sequence, 183 residues long: Nucleoside triphosphate pyrophosphatase (183 aa).

The active-site Proton acceptor is the aspartate 71.

This sequence belongs to the Maf family. Requires a divalent metal cation as cofactor.

It is found in the cytoplasm. The catalysed reaction is a ribonucleoside 5'-triphosphate + H2O = a ribonucleoside 5'-phosphate + diphosphate + H(+). The enzyme catalyses a 2'-deoxyribonucleoside 5'-triphosphate + H2O = a 2'-deoxyribonucleoside 5'-phosphate + diphosphate + H(+). In terms of biological role, nucleoside triphosphate pyrophosphatase. May have a dual role in cell division arrest and in preventing the incorporation of modified nucleotides into cellular nucleic acids. This is Nucleoside triphosphate pyrophosphatase from Campylobacter jejuni subsp. jejuni serotype O:2 (strain ATCC 700819 / NCTC 11168).